Here is a 311-residue protein sequence, read N- to C-terminus: Protoheme IX farnesyltransferase (311 aa).

Helical transmembrane passes span 32 to 52 (VMSL…VSIN), 53 to 73 (PWYG…AGVL), 104 to 124 (FVFG…FINW), 125 to 145 (FAAL…TIWL), 153 to 173 (IVIG…AATG), 180 to 200 (FLLF…LSLF), 224 to 244 (KQIL…FIID), 245 to 265 (FAGI…IYFA), and 290 to 310 (FYLA…YFII).

Belongs to the UbiA prenyltransferase family. Protoheme IX farnesyltransferase subfamily.

The protein localises to the cell inner membrane. It catalyses the reaction heme b + (2E,6E)-farnesyl diphosphate + H2O = Fe(II)-heme o + diphosphate. The protein operates within porphyrin-containing compound metabolism; heme O biosynthesis; heme O from protoheme: step 1/1. Converts heme B (protoheme IX) to heme O by substitution of the vinyl group on carbon 2 of heme B porphyrin ring with a hydroxyethyl farnesyl side group. This is Protoheme IX farnesyltransferase from Bartonella quintana (strain Toulouse) (Rochalimaea quintana).